The chain runs to 897 residues: Alanine--tRNA ligase (897 aa).

Zn(2+)-binding residues include His-581, His-585, Cys-684, and His-688.

It belongs to the class-II aminoacyl-tRNA synthetase family. Requires Zn(2+) as cofactor.

Its subcellular location is the cytoplasm. It carries out the reaction tRNA(Ala) + L-alanine + ATP = L-alanyl-tRNA(Ala) + AMP + diphosphate. Its function is as follows. Catalyzes the attachment of alanine to tRNA(Ala) in a two-step reaction: alanine is first activated by ATP to form Ala-AMP and then transferred to the acceptor end of tRNA(Ala). Also edits incorrectly charged Ser-tRNA(Ala) and Gly-tRNA(Ala) via its editing domain. This is Alanine--tRNA ligase from Mycobacterium sp. (strain KMS).